The primary structure comprises 219 residues: Ribose-5-phosphate isomerase A (219 aa).

Substrate contacts are provided by residues 28–31, 81–84, and 94–97; these read SGST, DGAD, and KGGG. The active-site Proton acceptor is E103. Position 121 (K121) interacts with substrate.

Belongs to the ribose 5-phosphate isomerase family. As to quaternary structure, homodimer.

It carries out the reaction aldehydo-D-ribose 5-phosphate = D-ribulose 5-phosphate. It functions in the pathway carbohydrate degradation; pentose phosphate pathway; D-ribose 5-phosphate from D-ribulose 5-phosphate (non-oxidative stage): step 1/1. Catalyzes the reversible conversion of ribose-5-phosphate to ribulose 5-phosphate. This is Ribose-5-phosphate isomerase A from Actinobacillus succinogenes (strain ATCC 55618 / DSM 22257 / CCUG 43843 / 130Z).